A 674-amino-acid chain; its full sequence is DNA ligase (674 aa).

Residues 31-35, 80-81, and E110 each bind NAD(+); these read DYEYD and SL. K112 serves as the catalytic N6-AMP-lysine intermediate. R133, E167, K283, and K307 together coordinate NAD(+). Residues C401, C404, C419, and C424 each contribute to the Zn(2+) site. Positions 584-673 constitute a BRCT domain; it reads KVEKIFEGMK…SKDEVKAVLE (90 aa).

This sequence belongs to the NAD-dependent DNA ligase family. LigA subfamily. Mg(2+) is required as a cofactor. The cofactor is Mn(2+).

It catalyses the reaction NAD(+) + (deoxyribonucleotide)n-3'-hydroxyl + 5'-phospho-(deoxyribonucleotide)m = (deoxyribonucleotide)n+m + AMP + beta-nicotinamide D-nucleotide.. Its function is as follows. DNA ligase that catalyzes the formation of phosphodiester linkages between 5'-phosphoryl and 3'-hydroxyl groups in double-stranded DNA using NAD as a coenzyme and as the energy source for the reaction. It is essential for DNA replication and repair of damaged DNA. This Clostridioides difficile (strain 630) (Peptoclostridium difficile) protein is DNA ligase.